The following is an 85-amino-acid chain: Large ribosomal subunit protein bL27 (85 aa).

The disordered stretch occupies residues 1 to 20; sequence MATKKAGGSTRNGRDSEAKR.

The protein belongs to the bacterial ribosomal protein bL27 family.

This is Large ribosomal subunit protein bL27 from Actinobacillus pleuropneumoniae serotype 5b (strain L20).